We begin with the raw amino-acid sequence, 84 residues long: Large ribosomal subunit protein bL27 (84 aa).

The disordered stretch occupies residues Met-1–Gly-22.

This sequence belongs to the bacterial ribosomal protein bL27 family.

This chain is Large ribosomal subunit protein bL27, found in Shewanella frigidimarina (strain NCIMB 400).